The primary structure comprises 71 residues: UPF0346 protein SAK_1533 (71 aa).

Belongs to the UPF0346 family.

This Streptococcus agalactiae serotype Ia (strain ATCC 27591 / A909 / CDC SS700) protein is UPF0346 protein SAK_1533.